The primary structure comprises 471 residues: Putative multidrug resistance protein MdtD (471 aa).

The Periplasmic segment spans residues 1-11; the sequence is MTELPDSTRWQ. A helical membrane pass occupies residues 12 to 32; it reads LWIVAFGFFMQSLDTTIVNTA. At 33–48 the chain is on the cytoplasmic side; that stretch reads LPSMAQSLGESPLHMH. The chain crosses the membrane as a helical span at residues 49-69; sequence MVIVSYVLTVAVMLPASGWLA. At 70-76 the chain is on the periplasmic side; it reads DKVGVRN. Residues 77–97 form a helical membrane-spanning segment; sequence IFFTAIVLFTLGSLFCALSGT. The Cytoplasmic segment spans residues 98–101; the sequence is LNEL. The chain crosses the membrane as a helical span at residues 102–124; the sequence is LLARALQGVGGAMMVPVGRLTVM. Residues 125-137 are Periplasmic-facing; the sequence is KIVPREQYMAAMT. Residues 138–158 form a helical membrane-spanning segment; the sequence is FVTLPGQVGPLLGPALGGLLV. The Cytoplasmic portion of the chain corresponds to 159-164; that stretch reads EYASWH. The chain crosses the membrane as a helical span at residues 165-185; that stretch reads WIFLINIPVGIIGAIATLLLM. Topologically, residues 186-196 are periplasmic; sequence PNYTMQTRRFD. Residues 197–217 traverse the membrane as a helical segment; the sequence is LSGFLLLAVGMAVLTLALDGS. Over 218–224 the chain is Cytoplasmic; the sequence is KGTGLSP. The chain crosses the membrane as a helical span at residues 225–245; sequence LAIAGLVAVGVVALVLYLLHA. Residues 246–262 lie on the Periplasmic side of the membrane; it reads RNNNRALFSLKLFRTRT. Residues 263–283 form a helical membrane-spanning segment; sequence FSLGLAGSFAGRIGSGMLPFM. Residues 284–285 lie on the Cytoplasmic side of the membrane; it reads TP. Residues 286–306 traverse the membrane as a helical segment; it reads VFLQIGLGFSPFHAGLMMIPM. Residues 307–341 are Periplasmic-facing; sequence VLGSMGMKRIVVQVVNRFGYRRVLVATTLGLSLIT. The chain crosses the membrane as a helical span at residues 342–362; that stretch reads LLFMTTALLGWYYVLPFVLFL. Topologically, residues 363 to 395 are cytoplasmic; it reads QGMVNSTRFSSMNTLTLKDLPDNLASSGNSLLS. A helical membrane pass occupies residues 396–416; sequence MIMQLSMSIGVTIAGLLLGLF. Topologically, residues 417–430 are periplasmic; it reads GSQHVSVDSGTTQT. The helical transmembrane segment at 431-451 threads the bilayer; that stretch reads VFMYTWLSMAFIIALPAFIFA. Residues 452 to 471 lie on the Cytoplasmic side of the membrane; it reads RVPNDTHQNVAISRRKRSAQ.

It belongs to the major facilitator superfamily. TCR/Tet family.

It localises to the cell inner membrane. This chain is Putative multidrug resistance protein MdtD, found in Shigella sonnei (strain Ss046).